The chain runs to 239 residues: MLPEHQELLGRLTRQRLNIELSGDQIEKFSIYADRLVEWNEKVNLTSITEPEEIILKHFVDSLALLSLVQGKRLADIGTGAGFPGIPLKILLPEVEVYLVDSLAKRLDFLETVIKELKLTKVQTVHARAEDFARDPHYRETFDCVTSRAVARLPVLLEYAVPLLKKGGYFLAAKGSQAQEEVMESKKALTVLGAEIKDIKLFNLGAEAEHRAIILVEKTSSTPPAYPRKAGTPGKKPLV.

Residues Gly78, Phe83, 129-130 (AE), and Arg148 each bind S-adenosyl-L-methionine.

Belongs to the methyltransferase superfamily. RNA methyltransferase RsmG family.

It is found in the cytoplasm. Functionally, specifically methylates the N7 position of a guanine in 16S rRNA. The protein is Ribosomal RNA small subunit methyltransferase G of Desulfitobacterium hafniense (strain Y51).